A 525-amino-acid polypeptide reads, in one-letter code: Eukaryotic translation initiation factor 3 subunit L (525 aa).

The span at 1–19 shows a compositional bias: acidic residues; it reads MYTQADEYDGGDAGYEDDY. The interval 1 to 21 is disordered; sequence MYTQADEYDGGDAGYEDDYSG. A PCI domain is found at 296–502; the sequence is DAIRCFSSVL…IHIADTKVDR (207 aa).

This sequence belongs to the eIF-3 subunit L family. Component of the eukaryotic translation initiation factor 3 (eIF-3) complex.

The protein localises to the cytoplasm. In terms of biological role, component of the eukaryotic translation initiation factor 3 (eIF-3) complex, which is involved in protein synthesis of a specialized repertoire of mRNAs and, together with other initiation factors, stimulates binding of mRNA and methionyl-tRNAi to the 40S ribosome. The eIF-3 complex specifically targets and initiates translation of a subset of mRNAs involved in cell proliferation. This Nematostella vectensis (Starlet sea anemone) protein is Eukaryotic translation initiation factor 3 subunit L.